A 151-amino-acid chain; its full sequence is MEEAEKAKRRSIELLNETRNCAYSSFVALAEALNISLNEDMKNMAIGFAGGISGSGHICGALWGSIAAASLYTMKMMGDRRKIQNPLERYMPVYAKCAGIYRKFVELNGSPNCGDLNPNLDLVSVEQRRKCMEIVSRAVEITLSSLKDQKT.

Residues 1–32 form the signal peptide; it reads MEEAEKAKRRSIELLNETRNCAYSSFVALAEA. The helical transmembrane segment at 45-67 threads the bilayer; that stretch reads AIGFAGGISGSGHICGALWGSIA.

The protein localises to the membrane. This is an uncharacterized protein from Archaeoglobus fulgidus (strain ATCC 49558 / DSM 4304 / JCM 9628 / NBRC 100126 / VC-16).